Reading from the N-terminus, the 1009-residue chain is Ulvan lyase, long isoform (1009 aa).

An N-terminal signal peptide occupies residues 1–32 (MTAQKSKYFNRIMTMNTLLFSLLTVGFSQAYA). Residue 137–138 (SH) participates in substrate binding. Catalysis depends on histidine 138, which acts as the Proton donor/acceptor. Residues aspartate 200, aspartate 210, and lysine 212 each coordinate Ca(2+). Substrate contacts are provided by tyrosine 291 and arginine 308. Residues aspartate 311, aspartate 314, and tyrosine 316 each coordinate Ca(2+). A substrate-binding site is contributed by tyrosine 372.

Belongs to the polysaccharide lyase 24 family.

In terms of biological role, ulvan lyase involved in ulvan degradation. Ulvan is the main polysaccharide component of the Ulvales (green seaweed) cell wall. It is composed of disaccharide building blocks comprising 3-sulfated rhamnose (Rha3S) linked to D-glucuronic acid (GlcA), L-iduronic acid (IduA), or D-xylose (Xyl). Ulvan lyase catalyzes preferentially the endolytic cleavage of the glycosidic bond between Rha3S and the uronic acid GlcA, but not IduA, producing oligosaccharides that have unsaturated 4-deoxy-L-threo-hex-4-enopyranosiduronic acid (deltaUA) at the non-reducing end. The most abundant end products in the degradation of the ulvan polysaccharide were deltaUA-Rha3S disaccharides and deltaUA-Rha3S-IduA-Rha3S and deltaUA-Rha3S-Xyl-Rha3S tetrasaccharides. This is Ulvan lyase, long isoform (ullA) from Glaciecola sp. (strain KUL10).